We begin with the raw amino-acid sequence, 246 residues long: Small ribosomal subunit protein uS2c (246 aa).

The protein belongs to the universal ribosomal protein uS2 family.

The protein resides in the plastid. It localises to the chloroplast. This is Small ribosomal subunit protein uS2c (rps2) from Pelargonium hortorum (Common geranium).